Consider the following 220-residue polypeptide: Riboflavin kinase (220 aa).

The segment at 1-92 (MDTSDQYYRA…LSRILSIKSN (92 aa)) is H-T-H motif-like. The segment at 93-220 (IVMTGIVVPG…GDEVTIEVTA (128 aa)) is riboflavin kinase. 102–107 (GMGEGK) lines the CDP pocket. Threonine 131 and asparagine 133 together coordinate Mg(2+). 2 residues coordinate FMN: threonine 188 and glutamate 195. CDP is bound at residue 200–203 (KYLR).

The protein belongs to the archaeal riboflavin kinase family. Requires Mg(2+) as cofactor.

It carries out the reaction riboflavin + CTP = CDP + FMN + H(+). It participates in cofactor biosynthesis; FMN biosynthesis; FMN from riboflavin (CTP route): step 1/1. Its function is as follows. Catalyzes the CTP-dependent phosphorylation of riboflavin (vitamin B2) to form flavin mononucleotide (FMN). The polypeptide is Riboflavin kinase (ribK) (Thermoplasma volcanium (strain ATCC 51530 / DSM 4299 / JCM 9571 / NBRC 15438 / GSS1)).